The following is a 90-amino-acid chain: MYSLDLTLKYSPIPVSVQRKEADAAQALYQSVLEAMKGDYATLLELTCEKDEDKKIALLSDQISAVVLNKKSGAAAGGRVPGFFATQAAE.

It belongs to the UPF0367 family.

The sequence is that of UPF0367 protein SYNPCC7002_A0153 from Picosynechococcus sp. (strain ATCC 27264 / PCC 7002 / PR-6) (Agmenellum quadruplicatum).